The primary structure comprises 138 residues: Large ribosomal subunit protein uL16 (138 aa).

Residues 1 to 14 (MLQPKRTKYRRTHR) are compositionally biased toward basic residues. The interval 1 to 24 (MLQPKRTKYRRTHRLQHDKGEAHT) is disordered. Basic and acidic residues predominate over residues 15-24 (LQHDKGEAHT).

The protein belongs to the universal ribosomal protein uL16 family. In terms of assembly, part of the 50S ribosomal subunit.

Functionally, binds 23S rRNA and is also seen to make contacts with the A and possibly P site tRNAs. This chain is Large ribosomal subunit protein uL16, found in Mycoplasma mobile (strain ATCC 43663 / 163K / NCTC 11711) (Mesomycoplasma mobile).